The chain runs to 424 residues: Double homeobox protein 4 (424 aa).

The segment covering 1–10 (MALPTPSDST) has biased composition (polar residues). Disordered regions lie at residues 1 to 24 (MALPTPSDSTLPAEARGRGRRRRL), 72 to 102 (SRQLRQHRRESRPWPGRRGPPEGRRKRTAVT), 218 to 362 (LQPS…LQEP), and 388 to 414 (QPLLETEAPGELEASEEAASLEAPLSE). DNA-binding regions (homeobox) lie at residues 19–78 (GRRR…LRQH) and 94–153 (GRRK…PGQG). Over residues 265-274 (KSREDRDPQR) the composition is skewed to basic and acidic residues. 2 stretches are compositionally biased toward low complexity: residues 278 to 302 (PGPCAVAQPGPAQAGPQGQGVLAPP) and 319 to 329 (AGAAWEPQAGA). The segment at 327–424 (AGAAPPPQPA…EEYRALLEEL (98 aa)) is required for interaction with EP300 and CREBBP, and for transcriptional activation of target genes. Residues 405-424 (AASLEAPLSEEEYRALLEEL) are important for transcriptional activation of target genes.

The protein belongs to the paired homeobox family. As to quaternary structure, binds DNA as a monomer. Interacts (via C-terminus) with EP300 and CREBBP. As to expression, isoform 1: Does not seem to be expressed in normal muscle, but is detected in muscle of individuals with FSHD, and also in testis (at protein level). Isoform 1: Does not seem to be expressed in normal muscle, but in muscle of individuals with FSHD, where it may be toxic to cells. Isoform 2: Detected in skeletal muscle, fibroblasts and testis from healthy individuals.

It is found in the nucleus. Its subcellular location is the cytoplasm. Functionally, transcription factor that is selectively and transiently expressed in cleavage-stage embryos. Binds to double-stranded DNA elements with the consensus sequence 5'-TAATCTAATCA-3'. Binds to chromatin containing histone H3 acetylated at 'Lys-27' (H3K27ac) and promotes deacetylation of H3K27ac. In parallel, binds to chromatin that lacks histone H3 acetylation at 'Lys-27' (H3K27ac) and recruits EP300 and CREBBP to promote acetylation of histone H3 at 'Lys-27' at new sites. Involved in transcriptional regulation of numerous genes, primarily as transcriptional activator, but also mediates repression of a set of target genes. Promotes expression of ZSCAN4 and KDM4E, two proteins with essential roles during early embryogenesis. Promotes nuclear translocation of CTNNB1/beta-catenin and its subsequent activation of target genes. Heterologous expression in cultured embryonic stem cells mediates transcription of HERVL retrotransposons and transcripts derived from ACRO1 and HSATII satellite repeats. May activate expression of PITX1. May regulate microRNA (miRNA) expression. Inappropriate expression can inhibit myogenesis and promote apoptosis. In terms of biological role, probably inactive as a transcriptional activator, due to the absence of the C-terminal region that is important for transcriptional activation. Can inhibit transcriptional activation mediated by isoform 1. Heterologous expression of isoform 2 has no deleterious effect on cell survival. In Homo sapiens (Human), this protein is Double homeobox protein 4.